The following is a 430-amino-acid chain: MALLHSGRFLSGVAAAFHPGLAAAASARASSWWAHVEMGPPDPILGVTEAFKRDTNSKKMNLGVGAYRDDNGKPYVLPSVRKAEAQIAAKNLDKEYLPIAGLAEFCKASAELALGENNEVLKSGRYVTVQTISGTGALRIGASFLQRFFKFSRDVFLPKPTWGNHTPIFRDAGMQLQSYRYYDPKTCGFDFTGAIEDISKIPAQSVILLHACAHNPTGVDPRPEQWKEMATVVKKNNLFAFFDMAYQGFASGDGNKDAWAVRHFIEQGINVCLCQSYAKNMGLYGERVGAFTVVCKDAEEAKRVESQLKILIRPMYSNPPINGARIASTILTSPDLRKQWLHEVKGMADRIISMRTQLVSNLKKEGSSHNWQHIIDQIGMFCYTGLKPEQVERLTKEFSIYMTKDGRISVAGVTSGNVAYLAHAIHQVTK.

The N-terminal 29 residues, 1-29, are a transit peptide targeting the mitochondrion; the sequence is MALLHSGRFLSGVAAAFHPGLAAAASARA. At Thr48 the chain carries Phosphothreonine. Lys59 carries the post-translational modification N6-acetyllysine. Residue Gly65 participates in substrate binding. Position 73 is an N6-acetyllysine; alternate (Lys73). Lys73 carries the post-translational modification N6-succinyllysine; alternate. N6-acetyllysine is present on Lys82. Lys90 is subject to N6-acetyllysine; alternate. The residue at position 90 (Lys90) is an N6-succinyllysine; alternate. Tyr96 is subject to 3'-nitrotyrosine; alternate. Tyr96 carries the post-translational modification Phosphotyrosine; alternate. Residues Lys107 and Lys122 each carry the N6-acetyllysine; alternate modification. An N6-succinyllysine; alternate mark is found at Lys107 and Lys122. At Ser143 the chain carries Phosphoserine. Lys159 carries the post-translational modification N6-acetyllysine; alternate. Lys159 is subject to N6-succinyllysine; alternate. Trp162 lines the substrate pocket. N6-acetyllysine; alternate is present on Lys185. The residue at position 185 (Lys185) is an N6-succinyllysine; alternate. Residue Asn215 coordinates substrate. Lys227 carries the post-translational modification N6-succinyllysine. Lys234 carries the N6-acetyllysine modification. N6-acetyllysine; alternate occurs at positions 279 and 296. Lys279 is modified (N6-(pyridoxal phosphate)lysine; alternate). At Lys296 the chain carries N6-succinyllysine; alternate. Lys302 carries the N6-acetyllysine modification. Residue Lys309 is modified to N6-acetyllysine; alternate. Lys309 is subject to N6-succinyllysine; alternate. At Arg313 the chain carries Asymmetric dimethylarginine. N6-acetyllysine; alternate is present on Lys338. Lys338 is subject to N6-succinyllysine; alternate. Lys345 is modified (N6-acetyllysine). Lys363 carries the N6-acetyllysine; alternate modification. Lys363 is modified (N6-succinyllysine; alternate). Lys364 and Lys387 each carry N6-acetyllysine. Residues Lys396 and Lys404 each carry the N6-acetyllysine; alternate modification. N6-succinyllysine; alternate is present on residues Lys396 and Lys404. Residue Arg407 coordinates substrate.

Belongs to the class-I pyridoxal-phosphate-dependent aminotransferase family. Homodimer. Pyridoxal 5'-phosphate is required as a cofactor.

It localises to the mitochondrion matrix. Its subcellular location is the cell membrane. It catalyses the reaction L-aspartate + 2-oxoglutarate = oxaloacetate + L-glutamate. The catalysed reaction is L-kynurenine + 2-oxoglutarate = 4-(2-aminophenyl)-2,4-dioxobutanoate + L-glutamate. Catalyzes the irreversible transamination of the L-tryptophan metabolite L-kynurenine to form kynurenic acid (KA). As a member of the malate-aspartate shuttle, it has a key role in the intracellular NAD(H) redox balance. Is important for metabolite exchange between mitochondria and cytosol, and for amino acid metabolism. Facilitates cellular uptake of long-chain free fatty acids. The chain is Aspartate aminotransferase, mitochondrial (GOT2) from Bos taurus (Bovine).